The following is a 260-amino-acid chain: Global transcriptional regulator CodY (260 aa).

The segment at 1–159 is GAF domain; sequence MPNLLEKTRK…SSTVVGIQLL (159 aa). Positions 207–226 form a DNA-binding region, H-T-H motif; it reads ASVIADRIGITRSVIVNALR.

It belongs to the CodY family.

It is found in the cytoplasm. In terms of biological role, DNA-binding global transcriptional regulator which is involved in the adaptive response to starvation and acts by directly or indirectly controlling the expression of numerous genes in response to nutrient availability. During rapid exponential growth, CodY is highly active and represses genes whose products allow adaptation to nutrient depletion. The sequence is that of Global transcriptional regulator CodY from Streptococcus equi subsp. zooepidemicus (strain H70).